The chain runs to 136 residues: Translation initiation factor 5A (136 aa).

The residue at position 36 (Lys-36) is a Hypusine.

Belongs to the eIF-5A family.

The protein resides in the cytoplasm. Its function is as follows. Functions by promoting the formation of the first peptide bond. This chain is Translation initiation factor 5A (eIF5A), found in Hyperthermus butylicus (strain DSM 5456 / JCM 9403 / PLM1-5).